Reading from the N-terminus, the 80-residue chain is Exodeoxyribonuclease 7 small subunit (80 aa).

The protein belongs to the XseB family. In terms of assembly, heterooligomer composed of large and small subunits.

Its subcellular location is the cytoplasm. The catalysed reaction is Exonucleolytic cleavage in either 5'- to 3'- or 3'- to 5'-direction to yield nucleoside 5'-phosphates.. Bidirectionally degrades single-stranded DNA into large acid-insoluble oligonucleotides, which are then degraded further into small acid-soluble oligonucleotides. The sequence is that of Exodeoxyribonuclease 7 small subunit from Cronobacter sakazakii (strain ATCC BAA-894) (Enterobacter sakazakii).